Consider the following 329-residue polypeptide: Sideroflexin (329 aa).

5 consecutive transmembrane segments (helical) span residues 95–115 (AFLP…ASIG), 147–167 (ILEA…GLGW), 183–203 (LRMM…VLIM), 238–258 (FSRA…MGLF), and 274–294 (LNLA…IALF).

This sequence belongs to the sideroflexin family.

The protein resides in the mitochondrion membrane. Mitochondrial amino-acid transporter that mediates transport of serine into mitochondria. In Dictyostelium discoideum (Social amoeba), this protein is Sideroflexin.